The primary structure comprises 429 residues: UDP-N-acetylglucosamine 1-carboxyvinyltransferase (429 aa).

Residue 22–23 participates in phosphoenolpyruvate binding; the sequence is KN. Residue R96 participates in UDP-N-acetyl-alpha-D-glucosamine binding. C120 functions as the Proton donor in the catalytic mechanism. At C120 the chain carries 2-(S-cysteinyl)pyruvic acid O-phosphothioketal. UDP-N-acetyl-alpha-D-glucosamine is bound by residues 125 to 129, D310, and I332; that span reads RPVDL.

It belongs to the EPSP synthase family. MurA subfamily.

Its subcellular location is the cytoplasm. It catalyses the reaction phosphoenolpyruvate + UDP-N-acetyl-alpha-D-glucosamine = UDP-N-acetyl-3-O-(1-carboxyvinyl)-alpha-D-glucosamine + phosphate. Its pathway is cell wall biogenesis; peptidoglycan biosynthesis. Functionally, cell wall formation. Adds enolpyruvyl to UDP-N-acetylglucosamine. The sequence is that of UDP-N-acetylglucosamine 1-carboxyvinyltransferase from Caulobacter vibrioides (strain ATCC 19089 / CIP 103742 / CB 15) (Caulobacter crescentus).